The following is a 689-amino-acid chain: DNA ligase (689 aa).

NAD(+)-binding positions include aspartate 51–aspartate 55, serine 100–leucine 101, and glutamate 129. Lysine 131 serves as the catalytic N6-AMP-lysine intermediate. Residues arginine 152, glutamate 189, lysine 308, and lysine 332 each coordinate NAD(+). The Zn(2+) site is built by cysteine 426, cysteine 429, cysteine 444, and cysteine 450. The BRCT domain maps to alanine 609–arginine 689.

This sequence belongs to the NAD-dependent DNA ligase family. LigA subfamily. The cofactor is Mg(2+). Mn(2+) is required as a cofactor.

The enzyme catalyses NAD(+) + (deoxyribonucleotide)n-3'-hydroxyl + 5'-phospho-(deoxyribonucleotide)m = (deoxyribonucleotide)n+m + AMP + beta-nicotinamide D-nucleotide.. DNA ligase that catalyzes the formation of phosphodiester linkages between 5'-phosphoryl and 3'-hydroxyl groups in double-stranded DNA using NAD as a coenzyme and as the energy source for the reaction. It is essential for DNA replication and repair of damaged DNA. The protein is DNA ligase of Shewanella oneidensis (strain ATCC 700550 / JCM 31522 / CIP 106686 / LMG 19005 / NCIMB 14063 / MR-1).